A 133-amino-acid polypeptide reads, in one-letter code: Putative biopolymer transport protein ExbD-like 1 (133 aa).

Residues 1–15 (MNYDNYWDEDKPELN) are Cytoplasmic-facing. The helical transmembrane segment at 16–32 (ITPLVDVMLVLLAILMV) threads the bilayer. Over 33–133 (TTPTLTYKEE…FLKVSLITSP (101 aa)) the chain is Periplasmic.

It belongs to the ExbD/TolR family.

Its subcellular location is the cell inner membrane. The sequence is that of Putative biopolymer transport protein ExbD-like 1 from Helicobacter pylori (strain ATCC 700392 / 26695) (Campylobacter pylori).